The primary structure comprises 373 residues: Quinolinate synthase (373 aa).

The iminosuccinate site is built by His46 and Ser63. A [4Fe-4S] cluster-binding site is contributed by Cys109. Iminosuccinate is bound by residues 142–144 (YMN) and Ser163. Cys232 lines the [4Fe-4S] cluster pocket. Iminosuccinate is bound by residues 258 to 260 (HPE) and Thr275. Residue Cys324 coordinates [4Fe-4S] cluster.

This sequence belongs to the quinolinate synthase family. Type 3 subfamily. [4Fe-4S] cluster is required as a cofactor.

The protein localises to the cytoplasm. The enzyme catalyses iminosuccinate + dihydroxyacetone phosphate = quinolinate + phosphate + 2 H2O + H(+). It participates in cofactor biosynthesis; NAD(+) biosynthesis; quinolinate from iminoaspartate: step 1/1. In terms of biological role, catalyzes the condensation of iminoaspartate with dihydroxyacetone phosphate to form quinolinate. The polypeptide is Quinolinate synthase (Acidobacterium capsulatum (strain ATCC 51196 / DSM 11244 / BCRC 80197 / JCM 7670 / NBRC 15755 / NCIMB 13165 / 161)).